We begin with the raw amino-acid sequence, 596 residues long: Succinate dehydrogenase flavoprotein subunit (596 aa).

FAD-binding positions include 18–23 (GAGGAG), 41–56 (TKLFPTRSHTVAAQGG), and aspartate 225. Tele-8alpha-FAD histidine is present on histidine 49. Substrate contacts are provided by histidine 246 and threonine 258. Arginine 290 acts as the Proton acceptor in catalysis. Histidine 357 serves as a coordination point for substrate. Residue glutamate 391 coordinates FAD. Arginine 402 is a binding site for substrate. 407-408 (SL) is an FAD binding site.

It belongs to the FAD-dependent oxidoreductase 2 family. FRD/SDH subfamily. As to quaternary structure, part of an enzyme complex containing four subunits: a flavoprotein, an iron-sulfur, cytochrome b-556, and a hydrophobic anchor protein. FAD is required as a cofactor.

The protein localises to the cell inner membrane. It carries out the reaction a quinone + succinate = fumarate + a quinol. It functions in the pathway carbohydrate metabolism; tricarboxylic acid cycle; fumarate from succinate (bacterial route): step 1/1. In Rickettsia conorii (strain ATCC VR-613 / Malish 7), this protein is Succinate dehydrogenase flavoprotein subunit (sdhA).